Consider the following 401-residue polypeptide: Argininosuccinate synthase (401 aa).

Position 9 to 17 (9 to 17 (AYSGGLDTS)) interacts with ATP. Tyr-86 contributes to the L-citrulline binding site. Gly-116 serves as a coordination point for ATP. L-aspartate is bound by residues Thr-118, Asn-122, and Asp-123. Asn-122 contacts L-citrulline. Residues Arg-126, Ser-174, Ser-183, Glu-259, and Tyr-271 each coordinate L-citrulline.

The protein belongs to the argininosuccinate synthase family. Type 1 subfamily. As to quaternary structure, homotetramer.

It localises to the cytoplasm. It catalyses the reaction L-citrulline + L-aspartate + ATP = 2-(N(omega)-L-arginino)succinate + AMP + diphosphate + H(+). It functions in the pathway amino-acid biosynthesis; L-arginine biosynthesis; L-arginine from L-ornithine and carbamoyl phosphate: step 2/3. The chain is Argininosuccinate synthase from Bacillus cereus (strain Q1).